A 336-amino-acid chain; its full sequence is Fimbrial adhesin PapGII (336 aa).

The N-terminal stretch at 1 to 20 (MKKWFPALLFSLCVSGESSA) is a signal peptide. Disulfide bonds link C64–C138 and C217–C249. Residues E79 and 124–127 (GYKW) each bind D-galactose.

The protein belongs to the adhesin PapG family.

Its subcellular location is the secreted. The protein localises to the fimbrium. Functionally, tip adhesin component of type P pili that plays a critical role in kidney infection through targeted interaction with the globoseries glycolipids containing the Gal-alpha(1-4)-Gal disaccharide present on uroepithelial cells. In turn, transcriptionally regulates host gene expression in kidney cells, leading to inflammatory pathway activation and renal tissue damage. Acts thereby as key determinant of invasive uropathogenic E.coli (UPEC), which cause pyelonephritis and urinary-source bacteremia. The polypeptide is Fimbrial adhesin PapGII (Escherichia coli).